The primary structure comprises 142 residues: Gonadotropin subunit beta-2 (142 aa).

The N-terminal stretch at 1–23 is a signal peptide; the sequence is MLGLHVGTLISLFLCILLEPIEG. 6 disulfides stabilise this stretch: cysteine 29/cysteine 77, cysteine 43/cysteine 92, cysteine 46/cysteine 130, cysteine 54/cysteine 108, cysteine 58/cysteine 110, and cysteine 113/cysteine 120. Residue asparagine 33 is glycosylated (N-linked (GlcNAc...) asparagine).

This sequence belongs to the glycoprotein hormones subunit beta family. In terms of assembly, heterodimer of an alpha and a beta chain.

The protein resides in the secreted. Its function is as follows. Involved in gametogenesis and steroidogenesis. This chain is Gonadotropin subunit beta-2 (cgbb), found in Oncorhynchus tshawytscha (Chinook salmon).